We begin with the raw amino-acid sequence, 557 residues long: Nucleoporin AMO1 (557 aa).

The C3H1-type zinc finger occupies 1-25 (MTVCRFWQQGYCRNGNACKFEHPPK). Residues 114 to 141 (QGALNEIQAAYQAAQQQIQNTLQNIPAA) are a coiled coil. Positions 161–297 (ESSKGSSTGG…SALGPKPGAF (137 aa)) are disordered. SXFG repeat units lie at residues 171-174 (SVFG), 200-203 (SAFG), 213-216 (SAFG), 228-231 (SAFG), 240-243 (SAFG), 249-252 (STFG), 262-265 (SAFG), 282-285 (SAFG), 303-306 (SAFG), and 314-317 (SPFG). Over residues 195 to 215 (STPSTSAFGQPSPLGQKSSAF) the composition is skewed to polar residues. Residues 243 to 253 (GSPQTGSTFGQ) are compositionally biased toward polar residues. The interval 315–463 (PFGAAAQATQ…DLLSYATKNP (149 aa)) is disordered. Composition is skewed to polar residues over residues 321-338 (QATQPANPFGQPSQQAAN) and 351-366 (GQPSTTTAQNPFGQPS). 4 SXFG repeats span residues 348 to 351 (SAFG), 370 to 373 (SAFG), 387 to 390 (SLFG), and 407 to 410 (SAFG). Residues 367–385 (TQSSAFGQQQPQQAGTFGS) show a composition bias toward low complexity. Residues 388 to 429 (LFGQQQQQPSNVFGQPSTTSAFGSQAATSGFSQLGNATSTIG) show a composition bias toward polar residues. Positions 430–443 (ASPAGAQAPASKSP) are enriched in low complexity.

The nuclear pore complex (NPC) constitutes the exclusive means of nucleocytoplasmic transport. NPCs allow the passive diffusion of ions and small molecules and the active, nuclear transport receptor-mediated bidirectional transport of macromolecules such as proteins, RNAs, ribonucleoparticles (RNPs), and ribosomal subunits across the nuclear envelope. The 55-60 MDa NPC is composed of at least 28 different subunits: AMO1, ELYS, GLE1, GLE2, MLP1, NDC1, NIC96, NSP1, NUP133, NUP145, NUP152, NUP159, NUP170, NUP188, NUP192, NUP37, NUP49, NUP53, NUP56, NUP57, NUP82, NUP84, NUP85, POM152, POM33, POM34, SEC13 and SEH1. Due to its 8-fold rotational symmetry, all subunits are present with 8 copies or multiples thereof.

It localises to the nucleus. It is found in the nuclear pore complex. Its subcellular location is the nucleus membrane. Functionally, functions as a component of the nuclear pore complex (NPC). NPC components, collectively referred to as nucleoporins (NUPs), can play the role of both NPC structural components and of docking or interaction partners for transiently associated nuclear transport factors. Active directional transport is assured by both, a Phe-Gly (FG) repeat affinity gradient for these transport factors across the NPC and a transport cofactor concentration gradient across the nuclear envelope (GSP1 and GSP2 GTPases associated predominantly with GTP in the nucleus, with GDP in the cytoplasm). AMO1 is specifically important for nuclear protein and mRNA export. In Chaetomium thermophilum (strain DSM 1495 / CBS 144.50 / IMI 039719) (Thermochaetoides thermophila), this protein is Nucleoporin AMO1 (AMO1).